The chain runs to 360 residues: Popeye domain-containing protein 1 (360 aa).

Residues 1–48 (MNYTESSPLRESTAIGFTPELESIIPVPSNKTTCENWREIHHLVFHVA) lie on the Extracellular side of the membrane. Residues asparagine 2 and asparagine 30 are each glycosylated (N-linked (GlcNAc...) asparagine). A helical transmembrane segment spans residues 49–69 (NICFAVGLVIPTTLHLHMIFL). Arginine 70 is a topological domain (cytoplasmic). The helical transmembrane segment at 71–91 (GMLTLGCTLYIVWATLYRCAL) threads the bilayer. A topological domain (extracellular) is located at residue aspartate 92. A helical transmembrane segment spans residues 93–113 (IMIWNSVFLGVNILHLSYLLY). Residues 93–115 (IMIWNSVFLGVNILHLSYLLYKK) form a required for interaction with CAV3 region. Topologically, residues 114–360 (KKRPVKIEKE…PNTLKVHQLP (247 aa)) are cytoplasmic. The segment at 136–186 (RVPPDLFRRLTGQFCMIQTLKKGQTYAAEDKTSVDDRLSILLKGKMKVSYR) is required for interaction with KCNK2. Phosphoserine is present on residues serine 295 and serine 318. The disordered stretch occupies residues 317–360 (SSLHVSSPHQRASAKMKPIEEGAEDDDDVFEPASPNTLKVHQLP). The segment covering 337-346 (EGAEDDDDVF) has biased composition (acidic residues). Positions 350–360 (SPNTLKVHQLP) are enriched in polar residues.

It belongs to the popeye family. As to quaternary structure, homodimer. Homodimerization requires the C-terminus cytoplasmic region. Interacts (via the C-terminus cytoplasmic tail) with TJP1. Interacts (via the C-terminus cytoplasmic tail) with ARHGEF25/GEFT (via the DH domain). Interacts (via the C-terminus cytoplasmic tail) with VAMP3. Interacts with KCNK2; the interaction enhances KCNK2 surface expression and is inhibited by cAMP. Interacts with CAV3. Expressed in epithelial cells (at protein level). Expressed in fetal and adult heart and skeletal muscle.

Its subcellular location is the lateral cell membrane. The protein localises to the cell junction. It localises to the tight junction. The protein resides in the membrane. It is found in the cell membrane. Its subcellular location is the sarcolemma. The protein localises to the caveola. Its function is as follows. Cell adhesion molecule involved in the establishment and/or maintenance of cell integrity. Involved in the formation and regulation of the tight junction (TJ) paracellular permeability barrier in epithelial cells. Plays a role in VAMP3-mediated vesicular transport and recycling of different receptor molecules through its interaction with VAMP3. Plays a role in the regulation of cell shape and movement by modulating the Rho-family GTPase activity through its interaction with ARHGEF25/GEFT. Induces primordial adhesive contact and aggregation of epithelial cells in a Ca(2+)-independent manner. Also involved in striated muscle regeneration and repair and in the regulation of cell spreading. Important for the maintenance of cardiac function. Plays a regulatory function in heart rate dynamics mediated, at least in part, through cAMP-binding and, probably, by increasing cell surface expression of the potassium channel KCNK2 and enhancing current density. Is also a caveolae-associated protein important for the preservation of caveolae structural and functional integrity as well as for heart protection against ischemia injury. In Homo sapiens (Human), this protein is Popeye domain-containing protein 1.